Reading from the N-terminus, the 417-residue chain is UDP-N-acetylglucosamine 1-carboxyvinyltransferase 2 (417 aa).

22-23 provides a ligand contact to phosphoenolpyruvate; sequence KN. Arginine 92 is a UDP-N-acetyl-alpha-D-glucosamine binding site. Residue cysteine 116 is the Proton donor of the active site. Cysteine 116 is modified (2-(S-cysteinyl)pyruvic acid O-phosphothioketal). UDP-N-acetyl-alpha-D-glucosamine is bound by residues 121–125, aspartate 305, and isoleucine 327; that span reads RPIDL.

This sequence belongs to the EPSP synthase family. MurA subfamily.

The protein resides in the cytoplasm. It carries out the reaction phosphoenolpyruvate + UDP-N-acetyl-alpha-D-glucosamine = UDP-N-acetyl-3-O-(1-carboxyvinyl)-alpha-D-glucosamine + phosphate. The protein operates within cell wall biogenesis; peptidoglycan biosynthesis. Cell wall formation. Adds enolpyruvyl to UDP-N-acetylglucosamine. This Caldanaerobacter subterraneus subsp. tengcongensis (strain DSM 15242 / JCM 11007 / NBRC 100824 / MB4) (Thermoanaerobacter tengcongensis) protein is UDP-N-acetylglucosamine 1-carboxyvinyltransferase 2.